The primary structure comprises 325 residues: Eukaryotic translation initiation factor 3 subunit I (325 aa).

4 WD repeats span residues 8–47 (GHER…RLGT), 50–91 (GHTG…ALLK), 144–183 (CNDS…VLVN), and 186–225 (EHSR…HQKT). Phosphothreonine is present on Thr-219. An N6-acetyllysine modification is found at Lys-264. Lys-282 participates in a covalent cross-link: Glycyl lysine isopeptide (Lys-Gly) (interchain with G-Cter in ubiquitin). Residues 283-324 (GHFGPINSVAFHPDGKSYSSGGEDGYVRIHYFDPQYFEFEFE) form a WD 5 repeat. Tyr-308 is subject to Phosphotyrosine.

This sequence belongs to the eIF-3 subunit I family. In terms of assembly, component of the eukaryotic translation initiation factor 3 (eIF-3) complex, which is composed of 13 subunits: EIF3A, EIF3B, EIF3C, EIF3D, EIF3E, EIF3F, EIF3G, EIF3H, EIF3I, EIF3J, EIF3K, EIF3L and EIF3M. The eIF-3 complex appears to include 3 stable modules: module A is composed of EIF3A, EIF3B, EIF3G and EIF3I; module B is composed of EIF3F, EIF3H, and EIF3M; and module C is composed of EIF3C, EIF3D, EIF3E, EIF3K and EIF3L. EIF3C of module C binds EIF3B of module A and EIF3H of module B, thereby linking the three modules. EIF3J is a labile subunit that binds to the eIF-3 complex via EIF3B. The eIF-3 complex interacts with RPS6KB1 under conditions of nutrient depletion. Mitogenic stimulation leads to binding and activation of a complex composed of MTOR and RPTOR, leading to phosphorylation and release of RPS6KB1 and binding of EIF4B to eIF-3. Post-translationally, phosphorylated by TGF-beta type II receptor.

Its subcellular location is the cytoplasm. Its function is as follows. Component of the eukaryotic translation initiation factor 3 (eIF-3) complex, which is required for several steps in the initiation of protein synthesis. The eIF-3 complex associates with the 40S ribosome and facilitates the recruitment of eIF-1, eIF-1A, eIF-2:GTP:methionyl-tRNAi and eIF-5 to form the 43S pre-initiation complex (43S PIC). The eIF-3 complex stimulates mRNA recruitment to the 43S PIC and scanning of the mRNA for AUG recognition. The eIF-3 complex is also required for disassembly and recycling of post-termination ribosomal complexes and subsequently prevents premature joining of the 40S and 60S ribosomal subunits prior to initiation. The eIF-3 complex specifically targets and initiates translation of a subset of mRNAs involved in cell proliferation, including cell cycling, differentiation and apoptosis, and uses different modes of RNA stem-loop binding to exert either translational activation or repression. This chain is Eukaryotic translation initiation factor 3 subunit I, found in Bos taurus (Bovine).